The following is a 511-amino-acid chain: Fusicocca-1,10(14)-diene-8beta,16-diol C-9 hydroxylase (511 aa).

The helical transmembrane segment at 7-29 (TVAALAAVFVAGTLLSRLASWIR) threads the bilayer. 3 N-linked (GlcNAc...) asparagine glycosylation sites follow: Asn-64, Asn-163, and Asn-343. Cys-450 is a heme binding site.

The protein belongs to the cytochrome P450 family. Heme serves as cofactor.

Its subcellular location is the membrane. It participates in mycotoxin biosynthesis. In terms of biological role, cytochrome P450 monooxygenase; part of the 2 gene clusters that mediate the biosynthesis of fusicoccins, diterpene glucosides that display phytohormone-like activity and function as potent activators of plasma membrane H(+)-ATPases in plants by modifying 14-3-3 proteins and cause the plant disease constriction canker. The first step in the pathway is performed by the fusicoccadiene synthase PaFS that possesses both prenyl transferase and terpene cyclase activity, converting isopentenyl diphosphate and dimethylallyl diphosphate into geranylgeranyl diphosphate (GGDP) and successively converting GGDP into fusicocca-2,10(14)-diene, a precursor for fusicoccin H. The second step is the oxidation at the C-8 position by the cytochrome P450 monooxygenase PaP450-2 to yield fusicocca-2,10(14)-diene-8-beta-ol. The cytochrome P450 monooxygenase PaP450-1 then catalyzes the hydroxylation at the C-16 position to produce fusicocca-2,10(14)-diene-8-beta,16-diol. The dioxygenase fc-dox then catalyzes the 16-oxydation of fusicocca-2,10(14)-diene-8-beta,16-diol to yield an aldehyde (8-beta-hydroxyfusicocca-1,10(14)-dien-16-al). The short-chain dehydrogenase/reductase fc-sdr catalyzes the reduction of the aldehyde to yield fusicocca-1,10(14)-diene-8-beta,16-diol. The next step is the hydroxylation at C-9 performed by the cytochrome P450 monooxygenase PaP450-3 that leads to fusicoccin H aglycon which is glycosylated to fusicoccin H by the O-glycosyltransferase PaGT. Hydroxylation at C-12 by the cytochrome P450 monooxygenase PaP450-4 leads then to the production of fusicoccin Q and is followed by methylation by the O-methyltransferase PaMT to yield fusicoccin P. Fusicoccin P is further converted to fusicoccin J via prenylation by the O-glucose prenyltransferase PaPT. Cytochrome P450 monooxygenase PaP450-5 then performs hydroxylation at C-19 to yield dideacetyl-fusicoccin A which is acetylated to 3'-O-deacetyl-fusicoccin A by the O-acetyltransferase PaAT-2. Finally, a another acetylation by the O-acetyltransferase PaAT-1 yields fusicoccin A. This chain is Fusicocca-1,10(14)-diene-8beta,16-diol C-9 hydroxylase, found in Phomopsis amygdali (Fusicoccum amygdali).